Reading from the N-terminus, the 319-residue chain is Transaldolase (319 aa).

The active-site Schiff-base intermediate with substrate is the Lys125.

This sequence belongs to the transaldolase family. Type 1 subfamily. In terms of assembly, homodimer.

The protein localises to the cytoplasm. The catalysed reaction is D-sedoheptulose 7-phosphate + D-glyceraldehyde 3-phosphate = D-erythrose 4-phosphate + beta-D-fructose 6-phosphate. The protein operates within carbohydrate degradation; pentose phosphate pathway; D-glyceraldehyde 3-phosphate and beta-D-fructose 6-phosphate from D-ribose 5-phosphate and D-xylulose 5-phosphate (non-oxidative stage): step 2/3. Transaldolase is important for the balance of metabolites in the pentose-phosphate pathway. This Ralstonia pickettii (strain 12J) protein is Transaldolase.